The sequence spans 275 residues: 4-hydroxy-3-methylbut-2-enyl diphosphate reductase (275 aa).

Residue Cys12 participates in [4Fe-4S] cluster binding. 2 residues coordinate (2E)-4-hydroxy-3-methylbut-2-enyl diphosphate: His40 and His70. His40 and His70 together coordinate dimethylallyl diphosphate. The isopentenyl diphosphate site is built by His40 and His70. Cys92 contacts [4Fe-4S] cluster. His119 provides a ligand contact to (2E)-4-hydroxy-3-methylbut-2-enyl diphosphate. Position 119 (His119) interacts with dimethylallyl diphosphate. His119 is a binding site for isopentenyl diphosphate. Glu121 serves as the catalytic Proton donor. Residue Thr151 participates in (2E)-4-hydroxy-3-methylbut-2-enyl diphosphate binding. Cys181 lines the [4Fe-4S] cluster pocket. Ser209, Ser210, Asn211, and Ser251 together coordinate (2E)-4-hydroxy-3-methylbut-2-enyl diphosphate. Dimethylallyl diphosphate is bound by residues Ser209, Ser210, Asn211, and Ser251. Residues Ser209, Ser210, Asn211, and Ser251 each coordinate isopentenyl diphosphate.

Belongs to the IspH family. The cofactor is [4Fe-4S] cluster.

It carries out the reaction isopentenyl diphosphate + 2 oxidized [2Fe-2S]-[ferredoxin] + H2O = (2E)-4-hydroxy-3-methylbut-2-enyl diphosphate + 2 reduced [2Fe-2S]-[ferredoxin] + 2 H(+). It catalyses the reaction dimethylallyl diphosphate + 2 oxidized [2Fe-2S]-[ferredoxin] + H2O = (2E)-4-hydroxy-3-methylbut-2-enyl diphosphate + 2 reduced [2Fe-2S]-[ferredoxin] + 2 H(+). It participates in isoprenoid biosynthesis; dimethylallyl diphosphate biosynthesis; dimethylallyl diphosphate from (2E)-4-hydroxy-3-methylbutenyl diphosphate: step 1/1. Its pathway is isoprenoid biosynthesis; isopentenyl diphosphate biosynthesis via DXP pathway; isopentenyl diphosphate from 1-deoxy-D-xylulose 5-phosphate: step 6/6. Functionally, catalyzes the conversion of 1-hydroxy-2-methyl-2-(E)-butenyl 4-diphosphate (HMBPP) into a mixture of isopentenyl diphosphate (IPP) and dimethylallyl diphosphate (DMAPP). Acts in the terminal step of the DOXP/MEP pathway for isoprenoid precursor biosynthesis. The protein is 4-hydroxy-3-methylbut-2-enyl diphosphate reductase of Thermotoga petrophila (strain ATCC BAA-488 / DSM 13995 / JCM 10881 / RKU-1).